The chain runs to 235 residues: MGQKVHPNGIRLGIVKPWNSTWFANTQDFADNLDGDFKVRKFLNKELANASVSRITIERPAKSIRVTIHTARPGIVIGKKGEDVEKLRNAVSQIAGVPAQINIAEVKKPELDAKLVADSIASQLERRVMFRRAMKRAVQNAMRLGAKGIKVEVSGRLGGAEIARSEWYREGRVPLHTLRADIDYNTAEAHTTYGVIGVKVWIFKGEILGGMAAVIESEKEPAAQPKKAPRGKGRK.

Positions 39–107 (VRKFLNKELA…PAQINIAEVK (69 aa)) constitute a KH type-2 domain.

It belongs to the universal ribosomal protein uS3 family. As to quaternary structure, part of the 30S ribosomal subunit. Forms a tight complex with proteins S10 and S14.

Functionally, binds the lower part of the 30S subunit head. Binds mRNA in the 70S ribosome, positioning it for translation. This chain is Small ribosomal subunit protein uS3, found in Actinobacillus pleuropneumoniae serotype 5b (strain L20).